The following is a 363-amino-acid chain: Serpentine receptor class beta-17 (363 aa).

The next 7 membrane-spanning stretches (helical) occupy residues 46 to 66 (AFLL…GSII), 75 to 95 (LLAF…SCFL), 120 to 140 (VILA…SMLC), 169 to 189 (IGFV…LYMY), 214 to 234 (YIFI…IGLY), 273 to 293 (CAQL…RIFL), and 304 to 324 (VTEF…ICIV).

The protein belongs to the nematode receptor-like protein srb family.

It localises to the membrane. This chain is Serpentine receptor class beta-17 (srb-17), found in Caenorhabditis elegans.